A 291-amino-acid chain; its full sequence is Lipoyl synthase (291 aa).

[4Fe-4S] cluster contacts are provided by Cys-43, Cys-48, Cys-54, Cys-69, Cys-73, Cys-76, and Ser-280. Positions 55 to 269 constitute a Radical SAM core domain; it reads FSSRTATFLI…AAYGRARGIP (215 aa).

Belongs to the radical SAM superfamily. Lipoyl synthase family. [4Fe-4S] cluster serves as cofactor.

It localises to the cytoplasm. It catalyses the reaction [[Fe-S] cluster scaffold protein carrying a second [4Fe-4S](2+) cluster] + N(6)-octanoyl-L-lysyl-[protein] + 2 oxidized [2Fe-2S]-[ferredoxin] + 2 S-adenosyl-L-methionine + 4 H(+) = [[Fe-S] cluster scaffold protein] + N(6)-[(R)-dihydrolipoyl]-L-lysyl-[protein] + 4 Fe(3+) + 2 hydrogen sulfide + 2 5'-deoxyadenosine + 2 L-methionine + 2 reduced [2Fe-2S]-[ferredoxin]. Its pathway is protein modification; protein lipoylation via endogenous pathway; protein N(6)-(lipoyl)lysine from octanoyl-[acyl-carrier-protein]: step 2/2. Catalyzes the radical-mediated insertion of two sulfur atoms into the C-6 and C-8 positions of the octanoyl moiety bound to the lipoyl domains of lipoate-dependent enzymes, thereby converting the octanoylated domains into lipoylated derivatives. This is Lipoyl synthase from Oleidesulfovibrio alaskensis (strain ATCC BAA-1058 / DSM 17464 / G20) (Desulfovibrio alaskensis).